A 501-amino-acid polypeptide reads, in one-letter code: Oxygen-independent coproporphyrinogen-III oxidase-like protein HemZ (501 aa).

A Radical SAM core domain is found at 163-405 (DLYRVKDEVS…VAWTKEHGYV (243 aa)). Y174 is a binding site for S-adenosyl-L-methionine. The [4Fe-4S] cluster site is built by C180 and C184. Y186 lines the S-adenosyl-L-methionine pocket. Residue C187 participates in [4Fe-4S] cluster binding. S-adenosyl-L-methionine-binding positions include G233, 234–235 (GT), E267, Q295, R307, and D332.

This sequence belongs to the anaerobic coproporphyrinogen-III oxidase family. HemZ subfamily. The cofactor is [4Fe-4S] cluster.

The protein operates within porphyrin-containing compound metabolism; protoporphyrin-IX biosynthesis. Involved in the biosynthesis of porphyrin-containing compound. The sequence is that of Oxygen-independent coproporphyrinogen-III oxidase-like protein HemZ (hemZ) from Bacillus subtilis (strain 168).